The sequence spans 228 residues: Ribose-5-phosphate isomerase A (228 aa).

Substrate contacts are provided by residues 27–30 (TGTT), 86–89 (DGAD), and 100–103 (KGMG). Catalysis depends on glutamate 109, which acts as the Proton acceptor. Lysine 127 is a binding site for substrate.

Belongs to the ribose 5-phosphate isomerase family. In terms of assembly, homodimer.

The catalysed reaction is aldehydo-D-ribose 5-phosphate = D-ribulose 5-phosphate. It functions in the pathway carbohydrate degradation; pentose phosphate pathway; D-ribose 5-phosphate from D-ribulose 5-phosphate (non-oxidative stage): step 1/1. Its function is as follows. Catalyzes the reversible conversion of ribose-5-phosphate to ribulose 5-phosphate. The sequence is that of Ribose-5-phosphate isomerase A from Borreliella afzelii (strain PKo) (Borrelia afzelii).